Reading from the N-terminus, the 223-residue chain is RNA-free ribonuclease P (223 aa).

It belongs to the HARP family.

It catalyses the reaction Endonucleolytic cleavage of RNA, removing 5'-extranucleotides from tRNA precursor.. Its function is as follows. RNA-free RNase P that catalyzes the removal of the 5'-leader sequence from pre-tRNA to produce the mature 5'-terminus. The polypeptide is RNA-free ribonuclease P (Methanococcus maripaludis (strain C6 / ATCC BAA-1332)).